The primary structure comprises 389 residues: Tryptophan synthase beta chain 1 (389 aa).

The residue at position 84 (lysine 84) is an N6-(pyridoxal phosphate)lysine.

This sequence belongs to the TrpB family. In terms of assembly, tetramer of two alpha and two beta chains. Pyridoxal 5'-phosphate is required as a cofactor.

It localises to the plastid. The protein resides in the chloroplast. The enzyme catalyses (1S,2R)-1-C-(indol-3-yl)glycerol 3-phosphate + L-serine = D-glyceraldehyde 3-phosphate + L-tryptophan + H2O. The protein operates within amino-acid biosynthesis; L-tryptophan biosynthesis; L-tryptophan from chorismate: step 5/5. The beta subunit is responsible for the synthesis of L-tryptophan from indole and L-serine. The sequence is that of Tryptophan synthase beta chain 1 (TSB1) from Zea mays (Maize).